We begin with the raw amino-acid sequence, 367 residues long: Aminomethyltransferase (367 aa).

It belongs to the GcvT family. In terms of assembly, the glycine cleavage system is composed of four proteins: P, T, L and H.

It carries out the reaction N(6)-[(R)-S(8)-aminomethyldihydrolipoyl]-L-lysyl-[protein] + (6S)-5,6,7,8-tetrahydrofolate = N(6)-[(R)-dihydrolipoyl]-L-lysyl-[protein] + (6R)-5,10-methylene-5,6,7,8-tetrahydrofolate + NH4(+). Its function is as follows. The glycine cleavage system catalyzes the degradation of glycine. This Mycobacterium avium (strain 104) protein is Aminomethyltransferase.